A 268-amino-acid chain; its full sequence is Shikimate dehydrogenase (NADP(+)) (268 aa).

Residues 13-15 (SLS) and T60 each bind shikimate. The active-site Proton acceptor is K64. E76 is a binding site for NADP(+). Positions 85 and 100 each coordinate shikimate. NADP(+) is bound by residues 124 to 128 (GAGGA), 148 to 153 (NRTMAR), and I209. Y211 contacts shikimate. Residue G232 participates in NADP(+) binding.

This sequence belongs to the shikimate dehydrogenase family. As to quaternary structure, homodimer.

The catalysed reaction is shikimate + NADP(+) = 3-dehydroshikimate + NADPH + H(+). Its pathway is metabolic intermediate biosynthesis; chorismate biosynthesis; chorismate from D-erythrose 4-phosphate and phosphoenolpyruvate: step 4/7. Involved in the biosynthesis of the chorismate, which leads to the biosynthesis of aromatic amino acids. Catalyzes the reversible NADPH linked reduction of 3-dehydroshikimate (DHSA) to yield shikimate (SA). This chain is Shikimate dehydrogenase (NADP(+)), found in Staphylococcus aureus (strain JH1).